A 145-amino-acid chain; its full sequence is 3-dehydroquinate dehydratase (145 aa).

The active-site Proton acceptor is Y22. 3 residues coordinate substrate: N71, H77, and D84. The active-site Proton donor is the H97. Substrate-binding positions include 98-99 (LS) and R108.

This sequence belongs to the type-II 3-dehydroquinase family. In terms of assembly, homododecamer.

The enzyme catalyses 3-dehydroquinate = 3-dehydroshikimate + H2O. The protein operates within metabolic intermediate biosynthesis; chorismate biosynthesis; chorismate from D-erythrose 4-phosphate and phosphoenolpyruvate: step 3/7. In terms of biological role, catalyzes a trans-dehydration via an enolate intermediate. The protein is 3-dehydroquinate dehydratase of Francisella philomiragia subsp. philomiragia (strain ATCC 25017 / CCUG 19701 / FSC 153 / O#319-036).